A 580-amino-acid polypeptide reads, in one-letter code: 2-succinyl-5-enolpyruvyl-6-hydroxy-3-cyclohexene-1-carboxylate synthase (580 aa).

This sequence belongs to the TPP enzyme family. MenD subfamily. Homodimer. Requires Mg(2+) as cofactor. Mn(2+) serves as cofactor. It depends on thiamine diphosphate as a cofactor.

It catalyses the reaction isochorismate + 2-oxoglutarate + H(+) = 5-enolpyruvoyl-6-hydroxy-2-succinyl-cyclohex-3-ene-1-carboxylate + CO2. The protein operates within quinol/quinone metabolism; 1,4-dihydroxy-2-naphthoate biosynthesis; 1,4-dihydroxy-2-naphthoate from chorismate: step 2/7. It functions in the pathway quinol/quinone metabolism; menaquinone biosynthesis. Catalyzes the thiamine diphosphate-dependent decarboxylation of 2-oxoglutarate and the subsequent addition of the resulting succinic semialdehyde-thiamine pyrophosphate anion to isochorismate to yield 2-succinyl-5-enolpyruvyl-6-hydroxy-3-cyclohexene-1-carboxylate (SEPHCHC). This Bacillus pumilus (strain SAFR-032) protein is 2-succinyl-5-enolpyruvyl-6-hydroxy-3-cyclohexene-1-carboxylate synthase.